Reading from the N-terminus, the 560-residue chain is DNA ligase B (560 aa).

The active-site N6-AMP-lysine intermediate is the Lys124.

Belongs to the NAD-dependent DNA ligase family. LigB subfamily.

It catalyses the reaction NAD(+) + (deoxyribonucleotide)n-3'-hydroxyl + 5'-phospho-(deoxyribonucleotide)m = (deoxyribonucleotide)n+m + AMP + beta-nicotinamide D-nucleotide.. Its function is as follows. Catalyzes the formation of phosphodiester linkages between 5'-phosphoryl and 3'-hydroxyl groups in double-stranded DNA using NAD as a coenzyme and as the energy source for the reaction. This Escherichia coli O17:K52:H18 (strain UMN026 / ExPEC) protein is DNA ligase B.